Consider the following 459-residue polypeptide: RuvB-like helicase 1 (459 aa).

75-82 is a binding site for ATP; it reads GGPSTGKT.

This sequence belongs to the RuvB family. As to quaternary structure, may form heterododecamers with RVB2. Component of the SWR1 chromatin remodeling complex, the INO80 chromatin remodeling complex, and of the R2TP complex.

It is found in the nucleus. It catalyses the reaction ATP + H2O = ADP + phosphate + H(+). In terms of biological role, DNA helicase which participates in several chromatin remodeling complexes, including the SWR1 and the INO80 complexes. The SWR1 complex mediates the ATP-dependent exchange of histone H2A for the H2A variant HZT1 leading to transcriptional regulation of selected genes by chromatin remodeling. The INO80 complex remodels chromatin by shifting nucleosomes and is involved in DNA repair. Also involved in pre-rRNA processing. The sequence is that of RuvB-like helicase 1 (RVB1) from Eremothecium gossypii (strain ATCC 10895 / CBS 109.51 / FGSC 9923 / NRRL Y-1056) (Yeast).